Consider the following 152-residue polypeptide: Nucleoplasmin-like protein (152 aa).

Over residues 109 to 128 the composition is skewed to acidic residues; sequence EVVDMEEDDEEDDVAEDEED. Positions 109-152 are disordered; that stretch reads EVVDMEEDDEEDDVAEDEEDEHPKKRAKIENAADGKNAKNNKKK. Residues 136–145 show a composition bias toward basic and acidic residues; the sequence is KIENAADGKN.

Belongs to the nucleoplasmin family. As to quaternary structure, decamer formed by two pentameric rings associated in a head-to-head fashion.

It localises to the nucleus. Binds to core histones and functions in the ATP-facilitated assembly of approximately regularly spaced nucleosomal arrays. May participate in parallel with other histone-binding proteins such as NAP-1. Functionally, inactive for chromatin assembly. In vitro it appears to form a high molecular mass aggregate with the core histones. This is Nucleoplasmin-like protein (Nlp) from Drosophila melanogaster (Fruit fly).